Consider the following 986-residue polypeptide: Rho guanine nucleotide exchange factor 2 (986 aa).

The Phorbol-ester/DAG-type zinc-finger motif lies at 39-86 (GHLFTTISVSGMTMCYACNKSITAKEALICPTCNVTIHNRCKDTLANC). Phosphoserine is present on residues S109, S122, S129, S133, and S137. The interval 131–161 (RQSLLGSRRGRSSLSLAKSVSTTNIAGHFND) is interaction with DYNLT1. Residue S143 is modified to Phosphoserine; by PAK4. 5 positions are modified to phosphoserine: S151, S163, S172, S174, and S177. A DH domain is found at 235-432 (KQQDVIYELI…KELLSNVDEG (198 aa)). K353 bears the N6-acetyllysine mark. The region spanning 472-571 (KLIHDGCLLW…WIRVIQQSVR (100 aa)) is the PH domain. Residues 587 to 611 (EAYLRRIKMELQQKDRALVELLREK) adopt a coiled-coil conformation. Phosphoserine occurs at positions 645 and 648. At T679 the chain carries Phosphothreonine; by MAPK1 or MAPK3. The segment at 683–705 (PALPLEPDSGGNTSPGVTANGEA) is disordered. A phosphoserine mark is found at S691, S696, S711, and S782. The stretch at 798-867 (EKQATELALL…RQLAALGQTE (70 aa)) forms a coiled coil. Positions 862–986 (ALGQTEPLPA…RDGEAVASES (125 aa)) are disordered. S886 is subject to Phosphoserine; by PAK1 and AURKA. Y894 carries the phosphotyrosine modification. A Phosphoserine; by PAK4 modification is found at S896. The segment covering 920–939 (RNFEDRERQELGSPEERLQD) has biased composition (basic and acidic residues). Phosphoserine occurs at positions 932, 940, and 941. Residues 941–950 (SDPDTGSEEE) are compositionally biased toward acidic residues. T945 is subject to Phosphothreonine. Phosphoserine is present on residues S947, S952, S953, S956, and S960.

In terms of assembly, found in a complex composed at least of ARHGEF2, NOD2 and RIPK2. Interacts with RIPK2; the interaction mediates tyrosine phosphorylation of RIPK2 by Src kinase CSK. Interacts with RIPK1 and RIPK3. Interacts with YWHAZ/14-3-3 zeta; when phosphorylated at Ser-886. Interacts with the kinases PAK4, AURKA and MAPK1. Interacts with RHOA and RAC1. Interacts with NOD1. Interacts (via the N-terminal zinc finger) with CAPN6 (via domain II). Interacts with DYNLT1. Post-translationally, phosphorylation of Ser-886 by PAK1 induces binding to protein YWHAZ, promoting its relocation to microtubules and the inhibition of its activity. Phosphorylated by AURKA and CDK1 during mitosis, which negatively regulates its activity. Phosphorylation by MAPK1 or MAPK3 increases nucleotide exchange activity. Phosphorylation by PAK4 releases GEF-H1 from the microtubules. Phosphorylated on serine, threonine and tyrosine residues in a RIPK2-dependent manner.

Its subcellular location is the cytoplasm. It localises to the cytoskeleton. The protein resides in the cell junction. The protein localises to the tight junction. It is found in the golgi apparatus. Its subcellular location is the spindle. It localises to the cell projection. The protein resides in the ruffle membrane. The protein localises to the cytoplasmic vesicle. Activates Rho-GTPases by promoting the exchange of GDP for GTP. May be involved in epithelial barrier permeability, cell motility and polarization, dendritic spine morphology, antigen presentation, leukemic cell differentiation, cell cycle regulation, innate immune response, and cancer. Binds Rac-GTPases, but does not seem to promote nucleotide exchange activity toward Rac-GTPases, which was uniquely reported in PubMed:9857026. May stimulate instead the cortical activity of Rac. Inactive toward CDC42, TC10, or Ras-GTPases. Forms an intracellular sensing system along with NOD1 for the detection of microbial effectors during cell invasion by pathogens. Required for RHOA and RIP2 dependent NF-kappaB signaling pathways activation upon S.flexneri cell invasion. Involved not only in sensing peptidoglycan (PGN)-derived muropeptides through NOD1 that is independent of its GEF activity, but also in the activation of NF-kappaB by Shigella effector proteins (IpgB2 and OspB) which requires its GEF activity and the activation of RhoA. Involved in innate immune signaling transduction pathway promoting cytokine IL6/interleukin-6 and TNF-alpha secretion in macrophage upon stimulation by bacterial peptidoglycans; acts as a signaling intermediate between NOD2 receptor and RIPK2 kinase. Contributes to the tyrosine phosphorylation of RIPK2 through Src tyrosine kinase leading to NF-kappaB activation by NOD2. Overexpression activates Rho-, but not Rac-GTPases, and increases paracellular permeability. Involved in neuronal progenitor cell division and differentiation. Involved in the migration of precerebellar neurons. The sequence is that of Rho guanine nucleotide exchange factor 2 (ARHGEF2) from Homo sapiens (Human).